We begin with the raw amino-acid sequence, 63 residues long: Large ribosomal subunit protein bL35 (63 aa).

The protein belongs to the bacterial ribosomal protein bL35 family.

This chain is Large ribosomal subunit protein bL35, found in Campylobacter jejuni (strain RM1221).